The following is a 191-amino-acid chain: Peptidyl-tRNA hydrolase (191 aa).

Tyr17 provides a ligand contact to tRNA. Residue His22 is the Proton acceptor of the active site. 3 residues coordinate tRNA: Tyr68, Asn70, and Asn116.

It belongs to the PTH family. Monomer.

Its subcellular location is the cytoplasm. It catalyses the reaction an N-acyl-L-alpha-aminoacyl-tRNA + H2O = an N-acyl-L-amino acid + a tRNA + H(+). Hydrolyzes ribosome-free peptidyl-tRNAs (with 1 or more amino acids incorporated), which drop off the ribosome during protein synthesis, or as a result of ribosome stalling. In terms of biological role, catalyzes the release of premature peptidyl moieties from peptidyl-tRNA molecules trapped in stalled 50S ribosomal subunits, and thus maintains levels of free tRNAs and 50S ribosomes. This Francisella tularensis subsp. mediasiatica (strain FSC147) protein is Peptidyl-tRNA hydrolase.